A 532-amino-acid chain; its full sequence is FRIGIDA-like protein 4a (532 aa).

The interval 406 to 432 (KTEKRKPAAVPANKRTRASYNGPMPPA) is disordered.

Belongs to the Frigida family. As to expression, expressed in leaves, shoot apex, flowers and during seed development.

The polypeptide is FRIGIDA-like protein 4a (FRL4A) (Arabidopsis thaliana (Mouse-ear cress)).